The sequence spans 590 residues: Peroxisomal targeting signal receptor (590 aa).

A Glycyl cysteine thioester (Cys-Gly) (interchain with G-Cter in ubiquitin) cross-link involves residue Cys-6. The tract at residues 7–29 (SVGSNPLAQLNKHAQGQGSSLSN) is amphipathic helix 1 (AH1). A Glycyl lysine isopeptide (Lys-Gly) (interchain with G-Cter in ubiquitin) cross-link involves residue Lys-18. The span at 18-30 (KHAQGQGSSLSNT) shows a compositional bias: polar residues. The tract at residues 18 to 45 (KHAQGQGSSLSNTHVRHSGGVSGSNVFR) is disordered. The amphipathic helix 2 (AH2) stretch occupies residues 56 to 74 (RQQLNSFMSQPMRLGEDKM). Short sequence motifs (wxxxF/Y motif) lie at residues 108–112 (WTREF), 139–143 (WKFRY), and 178–182 (WNDKF). The interval 227-243 (FQEVWDSIQQDTEEMLS) is amphipathic helix 4 (AH4). TPR repeat units lie at residues 285 to 319 (NPNA…DPKH), 320 to 353 (VDAW…DPNN), 424 to 457 (PDIQ…NPND), 459 to 491 (LMWN…KPSF), and 493 to 525 (RARY…HDVE).

Belongs to the peroxisomal targeting signal receptor family. Interacts (via WxxxF/Y and LVxEF motifs) with PEX14; promoting translocation through the PEX13-PEX14 docking complex. Monoubiquitinated at Cys-6 by PEX2 during PEX5 passage through the retrotranslocation channel: monoubiquitination acts as a signal for PEX5 extraction and is required for proper export from peroxisomes and recycling. When PEX5 recycling is compromised, polyubiquitinated at Lys-18 by PEX10 during its passage through the retrotranslocation channel, leading to its degradation.

It is found in the cytoplasm. The protein resides in the cytosol. It localises to the peroxisome matrix. Receptor that mediates peroxisomal import of proteins containing a C-terminal PTS1-type tripeptide peroxisomal targeting signal (SKL-type). Binds to cargo proteins containing a PTS1 peroxisomal targeting signal in the cytosol, and translocates them into the peroxisome matrix by passing through the PEX13-PEX14 docking complex along with cargo proteins. PEX5 receptor is then retrotranslocated into the cytosol, leading to release of bound cargo in the peroxisome matrix, and reset for a subsequent peroxisome import cycle. This chain is Peroxisomal targeting signal receptor (PEX5), found in Candida glabrata (strain ATCC 2001 / BCRC 20586 / JCM 3761 / NBRC 0622 / NRRL Y-65 / CBS 138) (Yeast).